A 427-amino-acid polypeptide reads, in one-letter code: Glutamate-1-semialdehyde 2,1-aminomutase (427 aa).

Position 265 is an N6-(pyridoxal phosphate)lysine (lysine 265).

Belongs to the class-III pyridoxal-phosphate-dependent aminotransferase family. HemL subfamily. Homodimer. It depends on pyridoxal 5'-phosphate as a cofactor.

The protein localises to the cytoplasm. It carries out the reaction (S)-4-amino-5-oxopentanoate = 5-aminolevulinate. It functions in the pathway porphyrin-containing compound metabolism; protoporphyrin-IX biosynthesis; 5-aminolevulinate from L-glutamyl-tRNA(Glu): step 2/2. The polypeptide is Glutamate-1-semialdehyde 2,1-aminomutase (Pseudomonas syringae pv. syringae (strain B728a)).